A 238-amino-acid polypeptide reads, in one-letter code: Protein LicA homolog (238 aa).

It belongs to the peptidase S49 family.

The sequence is that of Protein LicA homolog (licA) from Mycoplasma capricolum subsp. capricolum (strain California kid / ATCC 27343 / NCTC 10154).